Here is a 195-residue protein sequence, read N- to C-terminus: Imidazoleglycerol-phosphate dehydratase (195 aa).

Belongs to the imidazoleglycerol-phosphate dehydratase family.

It localises to the cytoplasm. It catalyses the reaction D-erythro-1-(imidazol-4-yl)glycerol 3-phosphate = 3-(imidazol-4-yl)-2-oxopropyl phosphate + H2O. It functions in the pathway amino-acid biosynthesis; L-histidine biosynthesis; L-histidine from 5-phospho-alpha-D-ribose 1-diphosphate: step 6/9. The polypeptide is Imidazoleglycerol-phosphate dehydratase (Deinococcus radiodurans (strain ATCC 13939 / DSM 20539 / JCM 16871 / CCUG 27074 / LMG 4051 / NBRC 15346 / NCIMB 9279 / VKM B-1422 / R1)).